We begin with the raw amino-acid sequence, 375 residues long: N5-carboxyaminoimidazole ribonucleotide synthase (375 aa).

Residues Arg108, Lys148, 153 to 159, 183 to 186, Glu191, His214, and 266 to 267 contribute to the ATP site; these read GYDGKGQ, EQYL, and NE. Residues 112–296 enclose the ATP-grasp domain; the sequence is KQTLLEANTQ…QFDTHILAIT (185 aa).

The protein belongs to the PurK/PurT family. As to quaternary structure, homodimer.

The enzyme catalyses 5-amino-1-(5-phospho-beta-D-ribosyl)imidazole + hydrogencarbonate + ATP = 5-carboxyamino-1-(5-phospho-D-ribosyl)imidazole + ADP + phosphate + 2 H(+). It participates in purine metabolism; IMP biosynthesis via de novo pathway; 5-amino-1-(5-phospho-D-ribosyl)imidazole-4-carboxylate from 5-amino-1-(5-phospho-D-ribosyl)imidazole (N5-CAIR route): step 1/2. Functionally, catalyzes the ATP-dependent conversion of 5-aminoimidazole ribonucleotide (AIR) and HCO(3)(-) to N5-carboxyaminoimidazole ribonucleotide (N5-CAIR). In Staphylococcus epidermidis (strain ATCC 12228 / FDA PCI 1200), this protein is N5-carboxyaminoimidazole ribonucleotide synthase.